A 530-amino-acid polypeptide reads, in one-letter code: Regulatory protein LuxO (530 aa).

Positions Ile194–Leu423 constitute a Sigma-54 factor interaction domain. ATP is bound by residues Gly222–Glu229 and Ala285–Glu294.

Functionally, involved in the regulation of different processes depending on the cell density. Acts together with sigma-54 to repress, perhaps indirectly, some genes. The protein is Regulatory protein LuxO (luxO) of Vibrio cholerae serotype O1 (strain ATCC 39541 / Classical Ogawa 395 / O395).